Reading from the N-terminus, the 547-residue chain is Nuclear speckle splicing regulatory protein 1 (547 aa).

The segment at 25–51 is disordered; it reads KPSVFGNDSDDDEASVSESLQREAAKK. Ser27 and Ser33 each carry phosphoserine. The stretch at 103-177 forms a coiled coil; sequence IHNLLKAVEI…EARLDVTKQK (75 aa). Positions 105–169 are necessary for alternative splicing activity; that stretch reads NLLKAVEIRK…REKRAAALEA (65 aa). A disordered region spans residues 188-523; sequence NQAVGEEAVP…KRSNEETVMS (336 aa). Residues Lys198 and Lys209 each participate in a glycyl lysine isopeptide (Lys-Gly) (interchain with G-Cter in SUMO2) cross-link. A compositionally biased stretch (basic and acidic residues) spans 200-217; the sequence is SFREARTVIKEEKLRGYP. Residues 223 to 232 show a composition bias toward polar residues; it reads ENRPQQNCAL. Residues 237-254 show a composition bias toward acidic residues; the sequence is EEAEENPDADSDSEESCD. 2 positions are modified to phosphoserine: Ser247 and Ser252. Positions 255–269 are enriched in basic and acidic residues; that stretch reads DGERGDHKVKSRGEE. The residue at position 276 (Lys276) is an N6-acetyllysine. The segment covering 277–287 has biased composition (basic residues); the sequence is YLKHHKNHTHS. Lys279 is covalently cross-linked (Glycyl lysine isopeptide (Lys-Gly) (interchain with G-Cter in SUMO2)). Positions 308-339 are enriched in basic and acidic residues; it reads RGHEHKGGQHQDRQSRDQESCHKDRSHREEKS. Positions 340–355 are enriched in basic residues; the sequence is SHRHREASHKDHHWKR. Composition is skewed to basic and acidic residues over residues 356–480 and 490–506; these read HEHE…KPPR and RLTEERPEKGSQPERPP. A coiled-coil region spans residues 376–417; it reads KREKYSSREQEKDRQWNDHDRYSEKEKKGKEKEEHRKARRER. Residue Ser447 is modified to Phosphoserine.

Belongs to the NSRP1 family. Interacts (via C-terminus) with SRSF1. Interacts (via C-terminus) with SRSF2.

The protein resides in the nucleus. Its subcellular location is the nucleus speckle. Functionally, RNA-binding protein that mediates pre-mRNA alternative splicing regulation. This is Nuclear speckle splicing regulatory protein 1 (Nsrp1) from Rattus norvegicus (Rat).